A 400-amino-acid chain; its full sequence is Formate-dependent phosphoribosylglycinamide formyltransferase (400 aa).

Residues Glu-22–Leu-23 and Glu-82 contribute to the N(1)-(5-phospho-beta-D-ribosyl)glycinamide site. ATP-binding positions include Arg-115, Lys-157, Ser-162–Gln-167, Glu-197–Val-200, and Glu-205. Positions Arg-120–Leu-315 constitute an ATP-grasp domain. Mg(2+) contacts are provided by Glu-274 and Glu-286. N(1)-(5-phospho-beta-D-ribosyl)glycinamide-binding positions include Asp-293, Lys-362, and Arg-369–Arg-370.

This sequence belongs to the PurK/PurT family. As to quaternary structure, homodimer.

The catalysed reaction is N(1)-(5-phospho-beta-D-ribosyl)glycinamide + formate + ATP = N(2)-formyl-N(1)-(5-phospho-beta-D-ribosyl)glycinamide + ADP + phosphate + H(+). It participates in purine metabolism; IMP biosynthesis via de novo pathway; N(2)-formyl-N(1)-(5-phospho-D-ribosyl)glycinamide from N(1)-(5-phospho-D-ribosyl)glycinamide (formate route): step 1/1. In terms of biological role, involved in the de novo purine biosynthesis. Catalyzes the transfer of formate to 5-phospho-ribosyl-glycinamide (GAR), producing 5-phospho-ribosyl-N-formylglycinamide (FGAR). Formate is provided by PurU via hydrolysis of 10-formyl-tetrahydrofolate. The polypeptide is Formate-dependent phosphoribosylglycinamide formyltransferase (Mycolicibacterium vanbaalenii (strain DSM 7251 / JCM 13017 / BCRC 16820 / KCTC 9966 / NRRL B-24157 / PYR-1) (Mycobacterium vanbaalenii)).